We begin with the raw amino-acid sequence, 133 residues long: Endoribonuclease YbeY (133 aa).

Positions 105, 109, and 115 each coordinate Zn(2+).

This sequence belongs to the endoribonuclease YbeY family. It depends on Zn(2+) as a cofactor.

It localises to the cytoplasm. Its function is as follows. Single strand-specific metallo-endoribonuclease involved in late-stage 70S ribosome quality control and in maturation of the 3' terminus of the 16S rRNA. This chain is Endoribonuclease YbeY, found in Lawsonia intracellularis (strain PHE/MN1-00).